Reading from the N-terminus, the 364-residue chain is Glycerol dehydrogenase (364 aa).

NAD(+) contacts are provided by aspartate 37, glycine 92, lysine 93, threonine 114, and serine 117. Aspartate 119 is a glycerol binding site. Serine 123, leucine 125, and tyrosine 129 together coordinate NAD(+). Glycerol contacts are provided by aspartate 169, histidine 252, and histidine 269. Zn(2+) is bound by residues aspartate 169, histidine 252, and histidine 269.

This sequence belongs to the iron-containing alcohol dehydrogenase family. Requires Zn(2+) as cofactor.

It catalyses the reaction glycerol + NAD(+) = dihydroxyacetone + NADH + H(+). The protein operates within polyol metabolism; glycerol fermentation; glycerone phosphate from glycerol (oxidative route): step 1/2. Catalyzes the NAD-dependent oxidation of glycerol to dihydroxyacetone (glycerone). The sequence is that of Glycerol dehydrogenase (gldA) from Thermotoga maritima (strain ATCC 43589 / DSM 3109 / JCM 10099 / NBRC 100826 / MSB8).